Here is a 447-residue protein sequence, read N- to C-terminus: Putative metabolite transport protein HI_0418 (447 aa).

The Cytoplasmic segment spans residues 1 to 28; the sequence is MCKPQQKHYGRQVMNTQNSLKQVATATM. The chain crosses the membrane as a helical span at residues 29 to 49; that stretch reads VGTAIEYFDNYIYAMAAVLVF. Residues 50-63 are Periplasmic-facing; the sequence is NHQFFHAVDPLSGQ. A helical transmembrane segment spans residues 64-84; it reads IAALSTLALTFIARPLGAILF. The Cytoplasmic portion of the chain corresponds to 85 to 96; that stretch reads GHFGDRFGRKNT. Residues 97-117 traverse the membrane as a helical segment; that stretch reads FVMSLLLMGISTVVIGLLPTY. The Periplasmic segment spans residues 118 to 119; sequence DS. A helical membrane pass occupies residues 120–140; sequence IGIWATILLCLCRIGQGIGLG. The Cytoplasmic portion of the chain corresponds to 141-167; the sequence is GEWGGAALVAVENAPEGKRGWYGTFPQ. Residues 168 to 188 form a helical membrane-spanning segment; sequence LGAPLGLLLANGVFLGITAIF. Residues 189–194 lie on the Periplasmic side of the membrane; the sequence is GQEAMT. A helical membrane pass occupies residues 195–215; sequence EWAWRIPFLSSVILVAIGLYV. Residues 216 to 249 are Cytoplasmic-facing; that stretch reads RLKLTEAPIFLAALNKPKPKRLPMLEVVTTHFKP. A helical transmembrane segment spans residues 250-270; the sequence is FFLGMLVCIAGYVLFYIMIAF. At 271-295 the chain is on the periplasmic side; the sequence is SQIYAKSAPTVSEAGYAMGLGFSPQ. A helical transmembrane segment spans residues 296-316; sequence IFTALLMASAVSLAITIAASG. The Cytoplasmic portion of the chain corresponds to 317-325; that stretch reads KYIDKIGRR. The chain crosses the membrane as a helical span at residues 326–346; the sequence is TWLIWTTVGVAIFGLSLPLFL. At 347–354 the chain is on the periplasmic side; it reads ENGTTTSL. Residues 355-375 form a helical membrane-spanning segment; that stretch reads FWFLFIGMGLIGMGYGPLASF. The Cytoplasmic portion of the chain corresponds to 376 to 390; the sequence is LPELFPTHARYSGAS. The helical transmembrane segment at 391–411 threads the bilayer; it reads LTYNIAGLFGASVAAIIALPL. Residues 412-418 lie on the Periplasmic side of the membrane; it reads NAHYGLK. Residues 419 to 439 form a helical membrane-spanning segment; that stretch reads GVGIYLTLNAVLSLVGLWFIS. Topologically, residues 440-447 are cytoplasmic; sequence ETKDKLLS.

Belongs to the major facilitator superfamily. Metabolite:H+ Symporter (MHS) family (TC 2.A.1.6) family.

The protein localises to the cell inner membrane. The protein is Putative metabolite transport protein HI_0418 of Haemophilus influenzae (strain ATCC 51907 / DSM 11121 / KW20 / Rd).